A 310-amino-acid polypeptide reads, in one-letter code: Beta-ketoacyl-[acyl-carrier-protein] synthase III 1 (310 aa).

Active-site residues include C112 and H235. An ACP-binding region spans residues 236–240 (QANIR). N265 is an active-site residue.

Belongs to the thiolase-like superfamily. FabH family. In terms of assembly, homodimer.

The protein resides in the cytoplasm. The catalysed reaction is malonyl-[ACP] + acetyl-CoA + H(+) = 3-oxobutanoyl-[ACP] + CO2 + CoA. It participates in lipid metabolism; fatty acid biosynthesis. Catalyzes the condensation reaction of fatty acid synthesis by the addition to an acyl acceptor of two carbons from malonyl-ACP. Catalyzes the first condensation reaction which initiates fatty acid synthesis and may therefore play a role in governing the total rate of fatty acid production. Possesses both acetoacetyl-ACP synthase and acetyl transacylase activities. Its substrate specificity determines the biosynthesis of branched-chain and/or straight-chain of fatty acids. In Bacillus anthracis, this protein is Beta-ketoacyl-[acyl-carrier-protein] synthase III 1.